The following is a 205-amino-acid chain: Holliday junction branch migration complex subunit RuvA (205 aa).

A domain I region spans residues 1–62; that stretch reads MFEYVTGYVE…EDIMALYGFK (62 aa). The domain II stretch occupies residues 63-141; sequence TREERLLFTK…DVVPDAFVDL (79 aa). The flexible linker stretch occupies residues 142–152; it reads FSDTERFDEKK. Residues 153-205 are domain III; that stretch reads GSSAELDEALEALRALGYAEREVSRVVPELLKESLTTDQYIKKALSLLLNGKR.

The protein belongs to the RuvA family. Homotetramer. Forms an RuvA(8)-RuvB(12)-Holliday junction (HJ) complex. HJ DNA is sandwiched between 2 RuvA tetramers; dsDNA enters through RuvA and exits via RuvB. An RuvB hexamer assembles on each DNA strand where it exits the tetramer. Each RuvB hexamer is contacted by two RuvA subunits (via domain III) on 2 adjacent RuvB subunits; this complex drives branch migration. In the full resolvosome a probable DNA-RuvA(4)-RuvB(12)-RuvC(2) complex forms which resolves the HJ.

The protein resides in the cytoplasm. Its function is as follows. The RuvA-RuvB-RuvC complex processes Holliday junction (HJ) DNA during genetic recombination and DNA repair, while the RuvA-RuvB complex plays an important role in the rescue of blocked DNA replication forks via replication fork reversal (RFR). RuvA specifically binds to HJ cruciform DNA, conferring on it an open structure. The RuvB hexamer acts as an ATP-dependent pump, pulling dsDNA into and through the RuvAB complex. HJ branch migration allows RuvC to scan DNA until it finds its consensus sequence, where it cleaves and resolves the cruciform DNA. This Bacillus cereus (strain ATCC 14579 / DSM 31 / CCUG 7414 / JCM 2152 / NBRC 15305 / NCIMB 9373 / NCTC 2599 / NRRL B-3711) protein is Holliday junction branch migration complex subunit RuvA.